Consider the following 536-residue polypeptide: Cytochrome P450 monooxygenase phqM (536 aa).

Position 464 (cysteine 464) interacts with heme.

The protein belongs to the cytochrome P450 family. The cofactor is heme.

It functions in the pathway alkaloid biosynthesis. Its function is as follows. Cytochrome P450 monooxygenase; part of the gene cluster that mediates the biosynthesis of paraherquamide, a fungal indole alkaloid that belongs to a family of natural products containing a characteristic bicyclo[2.2.2]diazaoctane core. The first steps in the biosynthesis of paraherquamide is the production of the beta-methyl-proline precursor from L-isoleucine. They require oxidation of a terminally hydroxylated L-isoleucine to the corresponding aldehyde by enzymes which have still to be identified. Spontaneous cyclization and dehydration would yield the 4-methyl pyrolline-5-carboxylic acid, which is then reduced by the pyrroline-5-carboxylate reductase phqD leading to the beta-methyl-proline precursor. The next step of paraherquamide biosynthesis involves coupling of beta-methyl-proline and L-tryptophan by the bimodular NRPS phqB, to produce a monooxopiperazine intermediate. The reductase (R) domain of phqB utilizes NADPH for hydride transfer to reduce the thioester bond of the T domain-tethered linear dipeptide to a hemithioaminal intermediate, which spontaneously cleaves the C-S bond to release the aldehyde product. This compound undergoes spontaneous cyclization and dehydration to give a dienamine which is reverse prenylated at C-2 by the reverse prenyltransferase phqJ. The other prenyltransferase present in the cluster, phqI may be a redundant gene in the pathway. During biosynthetic assembly, the key step to produce the polycyclic core is catalyzed by the bifunctional reductase and intramolecular [4+2] Diels-Alderase, phqE, resulting in formation of the [2.2.2] diazaoctane intermediate preparaherquamide. Following formation of preparaherquamide, an indole 2,3-epoxidation-initiated pinacol-like rearrangement is catalyzed by the phqK FAD-dependent monooxygenase. The prenyltransferase phqA, the cytochrome P450 monooxygenase phqL, and the FAD-linked oxidoreductase phqH (or the cytochrome P450 monooxygenase phqM), are proposed to be involved in the formation of the pyran ring. The FAD-dependent monooxygenase phqK is likely responsible for generation of the spiro-oxindole, and the N-methylation is likely mediated by the phqN methyltransferase leading to the isolable natural product paraherquamide F. However, the order of these biosynthetic steps has still to be determined. In late-stage paraherquamide biosynthesis, the third P450 monooxygenase, phqO, is probably responsible for the C-14 hydroxylation, transforming paraherquamide F to paraherquamide G, and paraherquamide E to the final product paraherquamide A. The expansion from the 6-membered ring pyran (in paraherquamides F and G) to the 7-membered dioxepin ring (in paraherquamides A and E) represents a poorly understood but intriguing process that probably involves the 2-oxoglutarate-dependent dioxygenase phqC. Finally, the remaining members of the paraherquamide cluster, including phqI as well as phqM (or phqH), do not have a clearly prescribed role and appear to be redundant. In Penicillium fellutanum, this protein is Cytochrome P450 monooxygenase phqM.